We begin with the raw amino-acid sequence, 165 residues long: Nutritionally-regulated adipose and cardiac-enriched protein (165 aa).

The disordered stretch occupies residues 1 to 47; the sequence is MRSAARVSRSNSHPRTRHPTRENEGTTWGSQPSRTERDGDRKCPPSI. Basic and acidic residues predominate over residues 34–43; sequence RTERDGDRKC. A helical membrane pass occupies residues 112-132; sequence GSLFLWLTLCALLGVVLVLYC.

As to expression, predominantly expressed in white adipose tissue (at protein level) and brown adipose tissue. Also detected in heart.

The protein localises to the cell membrane. The protein is Nutritionally-regulated adipose and cardiac-enriched protein (Nrac) of Mus musculus (Mouse).